A 316-amino-acid polypeptide reads, in one-letter code: C-type lectin domain family 10 member A (316 aa).

The Cytoplasmic portion of the chain corresponds to 1–39 (MTRTYENFQYLENKVKVQGFKNGPLPLQSLLQRLCSGPC). An Endocytosis signal motif is present at residues 5–8 (YENF). Residues 40 to 60 (HLLLSLGLGLLLLVIICVVGF) traverse the membrane as a helical; Signal-anchor for type II membrane protein segment. Residues 61–316 (QNSKFQRDLV…GLGQTSQESH (256 aa)) are Extracellular-facing. N-linked (GlcNAc...) asparagine glycosylation is found at asparagine 78 and asparagine 173. Residues 85-176 (AEIQALTSQG…VATLNNNAST (92 aa)) adopt a coiled-coil conformation. Cystine bridges form between cysteine 181-cysteine 192, cysteine 209-cysteine 304, and cysteine 282-cysteine 296. The 118-residue stretch at 188-305 (HQDSCYWFSH…CQRPYHWVCE (118 aa)) folds into the C-type lectin domain. The Ca(2+) site is built by valine 218, asparagine 220, glutamate 224, and aspartate 243. Glutamine 267 and aspartate 269 together coordinate a glycoprotein. Residues aspartate 269, aspartate 270, glutamate 280, and aspartate 281 each contribute to the Ca(2+) site. Position 280 (glutamate 280) interacts with a glycoprotein. A glycoprotein is bound by residues histidine 286 and asparagine 292. Ca(2+) contacts are provided by asparagine 292, aspartate 293, and glutamate 305.

As to quaternary structure, interacts with A-, B- and C-domain containing PTPRC/CD45 isoforms: isoform 1/CD45ABC, isoform 3/CD45AB, isoform 5/CD45BC and isoform 7/CD45B. Does not interact with PTPRC/CD45 isoform 2/CD45RO, a memory T cell marker. Expressed in myeloid antigen presenting cells in lymph nodes and skin (at protein level). Expressed in dermal dendritic cells (at protein level).

The protein resides in the cell membrane. It is found in the early endosome membrane. Its subcellular location is the lysosome membrane. Functionally, C-type lectin receptor involved in recognition of N-acetylgalactosamine (GalNAc)-terminated glycans by myeloid antigen presenting cells (APCs). Binds in a Ca(2+)-dependent manner to alpha- and beta-linked GalNAc residues on glycoprotein and glycolipid antigens, including alphaGalNAc- and Galbeta1-&gt;3GalNAc-O-Ser/Thr also known as Tn and T antigens, LacdiNAc epitope GalNAcbeta1-&gt;4GlcNAc and its derivative GalNAcbeta1-&gt;4-(Fucalpha1-&gt;3)GlcNAc, O-linked core 5 and 6 glycans, and GM2 and GD2 gangliosides. Acts as a signaling receptor at the interface of APC-T cell interactions. On immature dendritic cells, recognizes Tn antigen-carrying PTPRC/CD45 receptor on effector T cells and downregulates PTRPN/CD45 phosphatase activity with an impact on T cell activation threshold, cytokine production and proliferation. Modulates dendritic cell maturation toward a tolerogenic phenotype leading to generation of regulatory CD4-positive T cell subset with immune suppressive functions. Acts as an endocytic pattern recognition receptor involved in antitumor immunity. During tumorigenesis, recognizes Tn antigens and its sialylated forms Neu5Ac-Tn and Neu5Gc-Tn expressed on tumor cell mucins. On immature dendritic cells, can internalize Tn-terminated immunogens and target them to endolysosomal compartment for MHC class I and II antigen presentation to CD8-positive and CD4-positive T cells, respectively. This is C-type lectin domain family 10 member A from Homo sapiens (Human).